The sequence spans 502 residues: 4,4'-diaponeurosporene oxygenase (502 aa).

8–20 (IIGGGLGGISAAI) lines the FAD pocket.

It belongs to the carotenoid/retinoid oxidoreductase family. CrtP subfamily. It depends on FAD as a cofactor.

It catalyses the reaction all-trans-4,4'-diaponeurosporene + 2 AH2 + 2 O2 = 4,4'-diaponeurosporenal + 2 A + 3 H2O. Its pathway is carotenoid biosynthesis; staphyloxanthin biosynthesis; staphyloxanthin from farnesyl diphosphate: step 3/5. Its function is as follows. Involved in the biosynthesis of the yellow-orange carotenoid staphyloxanthin, which plays a role in the virulence via its protective function against oxidative stress. Catalyzes the oxidation of the terminal methyl side group of 4,4'-diaponeurosporene to form 4,4'-diaponeurosporen-4-al. This is 4,4'-diaponeurosporene oxygenase from Staphylococcus haemolyticus (strain JCSC1435).